A 319-amino-acid chain; its full sequence is Ribonuclease Z (319 aa).

Zn(2+)-binding residues include histidine 62, histidine 64, aspartate 66, histidine 67, histidine 145, aspartate 216, and histidine 274. Residue aspartate 66 is the Proton acceptor of the active site.

It belongs to the RNase Z family. In terms of assembly, homodimer. Zn(2+) serves as cofactor.

It catalyses the reaction Endonucleolytic cleavage of RNA, removing extra 3' nucleotides from tRNA precursor, generating 3' termini of tRNAs. A 3'-hydroxy group is left at the tRNA terminus and a 5'-phosphoryl group is left at the trailer molecule.. Functionally, zinc phosphodiesterase, which displays some tRNA 3'-processing endonuclease activity. Probably involved in tRNA maturation, by removing a 3'-trailer from precursor tRNA. The polypeptide is Ribonuclease Z (Synechococcus sp. (strain CC9605)).